Here is a 115-residue protein sequence, read N- to C-terminus: Movement protein TGB2 (115 aa).

At 1–13 (MSAQGHRLTAPVN) the chain is on the cytoplasmic side. A helical transmembrane segment spans residues 14-34 (SEKVYIVLGLSFALVSITFLL). Residues 35–74 (SRNSLPHVGDNIHSLPHGGAYRDGTKAILYNSPNLGSRVS) are Lumenal-facing. Residues 75 to 95 (LHNGKNAAFAAVLLLTLLIYG) traverse the membrane as a helical segment. The Cytoplasmic segment spans residues 96–115 (SKYISQRNHTCACGNNHSSH).

It belongs to the Tymovirales TGBp2 protein family.

The protein resides in the host endoplasmic reticulum membrane. Functionally, plays a role in viral cell-to-cell propagation, by facilitating genome transport to neighboring plant cells through plasmosdesmata,. The polypeptide is Movement protein TGB2 (Potato virus X (PVX)).